The primary structure comprises 250 residues: ATP synthase subunit a (250 aa).

Helical transmembrane passes span 27–47 (TDTVLSTAIAGLIVIALAFYL), 86–106 (FVLPLAVTIFVFILISNWLAV), 129–149 (INYVLALALFVFVCYHTAGIW), 191–211 (IFAGGILVALIALFPPYIMWA), and 219–239 (FDLFVGAIQAFIFALLTILYF).

The protein belongs to the ATPase A chain family. F-type ATPases have 2 components, CF(1) - the catalytic core - and CF(0) - the membrane proton channel. CF(1) has five subunits: alpha(3), beta(3), gamma(1), delta(1), epsilon(1). CF(0) has three main subunits: a(1), b(2) and c(9-12). The alpha and beta chains form an alternating ring which encloses part of the gamma chain. CF(1) is attached to CF(0) by a central stalk formed by the gamma and epsilon chains, while a peripheral stalk is formed by the delta and b chains.

The protein resides in the cell membrane. Key component of the proton channel; it plays a direct role in the translocation of protons across the membrane. The protein is ATP synthase subunit a of Mycobacterium bovis (strain ATCC BAA-935 / AF2122/97).